A 65-amino-acid chain; its full sequence is Carboxypeptidase A inhibitor (65 aa).

It belongs to the protease inhibitor I44 family.

The protein resides in the secreted. Inhibits carboxypeptidase A. In Ascaris suum (Pig roundworm), this protein is Carboxypeptidase A inhibitor.